Reading from the N-terminus, the 175-residue chain is Co-chaperone protein HscB homolog (175 aa).

Residues 7 to 79 (SHFDLFHLPA…LKRASYLLSL (73 aa)) form the J domain.

It belongs to the HscB family. In terms of assembly, interacts with HscA and stimulates its ATPase activity.

Co-chaperone involved in the maturation of iron-sulfur cluster-containing proteins. Seems to help targeting proteins to be folded toward HscA. The polypeptide is Co-chaperone protein HscB homolog (Burkholderia cenocepacia (strain ATCC BAA-245 / DSM 16553 / LMG 16656 / NCTC 13227 / J2315 / CF5610) (Burkholderia cepacia (strain J2315))).